A 753-amino-acid polypeptide reads, in one-letter code: Oligopeptide transporter 5 (753 aa).

The next 15 membrane-spanning stretches (helical) occupy residues 56–76 (TWFLGMVSCVVLAFVNNFFGY), 80–100 (PLTVSSVVAQIITLPLGKLMA), 132–152 (ITIFANTGAGGAYATSILTIV), 163–183 (AAAMLLVQTTQLLGYGWAGMF), 224–244 (FFLIVFFLSFTYYIVPGYLFP), 296–316 (FFAIANSFGGFIIFFYIILPI), 368–388 (YLSILFALIYGLSFGTLTATI), 432–452 (WWFVAVLAASFVLALYACEGF), 461–481 (WGLLLACAIAFTFTLPIGVIL), 506–528 (PLANVAFKTYGSVSIAQALYFVG), 544–564 (FIVQLVATIVASTVSFGTTWW), 583–603 (PWTCPGDVVFYNASIIWGIIG), 615–635 (PGMNWFFLIGFLAPVPVWFFA), 662–682 (AKAVHYWSWFAVGIVFNYYIF), and 695–715 (ILSAALDAGTAVMGVLIYFAL).

Belongs to the oligopeptide OPT transporter (TC 2.A.67.1) family. As to expression, expressed predominantly in flowers, and at a very low level in leaves and roots.

It is found in the membrane. Its function is as follows. Involved in the translocation of tetra- and pentapeptides across the cellular membrane in an energy-dependent manner. The chain is Oligopeptide transporter 5 (OPT5) from Arabidopsis thaliana (Mouse-ear cress).